The following is a 416-amino-acid chain: Putative F-box/kelch-repeat protein At1g12870 (416 aa).

The 50-residue stretch at 27–76 (MIASSSLPDDVVEEIFLKLPVKALMRFKSLSKQWRSTLESCYFSQRHLKI) folds into the F-box domain. Kelch repeat units follow at residues 199–243 (LVWL…PASA) and 297–341 (CMYE…HVLD).

The sequence is that of Putative F-box/kelch-repeat protein At1g12870 from Arabidopsis thaliana (Mouse-ear cress).